The following is a 191-amino-acid chain: Glutathione-independent glyoxalase DJ-1 (191 aa).

Residues E16, C111, and H130 contribute to the active site.

The protein belongs to the peptidase C56 family.

It localises to the cytoplasm. The protein localises to the nucleus. It carries out the reaction methylglyoxal + H2O = (R)-lactate + H(+). Functionally, catalyzes the conversion of methylglyoxal (MG) to D-lactate in a single glutathione (GSH)-independent step. May play a role in detoxifying endogenously produced glyoxals. Involved in protection against reactive oxygen species (ROS). The sequence is that of Glutathione-independent glyoxalase DJ-1 from Schizosaccharomyces pombe (strain 972 / ATCC 24843) (Fission yeast).